A 198-amino-acid polypeptide reads, in one-letter code: Ribosome maturation factor RimP (198 aa).

Belongs to the RimP family.

It localises to the cytoplasm. In terms of biological role, required for maturation of 30S ribosomal subunits. This Rhizobium etli (strain CIAT 652) protein is Ribosome maturation factor RimP.